The chain runs to 356 residues: Protein RecA (356 aa).

Residue 75-82 (GPESSGKT) coordinates ATP.

Belongs to the RecA family.

The protein resides in the cytoplasm. Can catalyze the hydrolysis of ATP in the presence of single-stranded DNA, the ATP-dependent uptake of single-stranded DNA by duplex DNA, and the ATP-dependent hybridization of homologous single-stranded DNAs. It interacts with LexA causing its activation and leading to its autocatalytic cleavage. The protein is Protein RecA of Burkholderia mallei (strain ATCC 23344).